Reading from the N-terminus, the 328-residue chain is uncharacterized protein (328 aa).

The residue at position 170 (Ser170) is a Phosphoserine.

The protein localises to the cytoplasm. Its subcellular location is the nucleus. This is an uncharacterized protein from Schizosaccharomyces pombe (strain 972 / ATCC 24843) (Fission yeast).